Here is a 194-residue protein sequence, read N- to C-terminus: Inosine triphosphate pyrophosphatase (194 aa).

10–15 (TGNANK) contributes to the ITP binding site. Residue E41 participates in Mg(2+) binding. Residues K54, 72-73 (DT), K89, 147-150 (FGWD), K172, and 177-178 (QR) each bind ITP.

Belongs to the HAM1 NTPase family. Homodimer. Requires Mg(2+) as cofactor. The cofactor is Mn(2+).

It is found in the cytoplasm. It localises to the nucleus. It catalyses the reaction ITP + H2O = IMP + diphosphate + H(+). The enzyme catalyses dITP + H2O = dIMP + diphosphate + H(+). It carries out the reaction XTP + H2O = XMP + diphosphate + H(+). In terms of biological role, pyrophosphatase that hydrolyzes non-canonical purine nucleotides such as inosine triphosphate (ITP), deoxyinosine triphosphate (dITP) or xanthosine 5'-triphosphate (XTP) to their respective monophosphate derivatives. The enzyme does not distinguish between the deoxy- and ribose forms. Probably excludes non-canonical purines from RNA and DNA precursor pools, thus preventing their incorporation into RNA and DNA and avoiding chromosomal lesions. The protein is Inosine triphosphate pyrophosphatase of Kluyveromyces lactis (strain ATCC 8585 / CBS 2359 / DSM 70799 / NBRC 1267 / NRRL Y-1140 / WM37) (Yeast).